The sequence spans 317 residues: uncharacterized protein (317 aa).

The HTH lysR-type domain maps to 29 to 86 (IDLNLLTIFEAVYVHKGIVNAAKVLNLTPSAISQSIQKLRVIFPDPLFIRKGQGVTPT). A DNA-binding region (H-T-H motif) is located at residues 46-65 (IVNAAKVLNLTPSAISQSIQ).

This sequence belongs to the LysR transcriptional regulatory family.

This is an uncharacterized protein from Escherichia coli (strain K12).